The primary structure comprises 198 residues: Probable GTP-binding protein EngB (198 aa).

The EngB-type G domain maps to 22–197; sequence TLPEYAFIGR…LDYIEGINNS (176 aa). GTP contacts are provided by residues 30 to 37, 57 to 61, 75 to 78, 142 to 145, and 175 to 178; these read GRSNVGKS, GKTQL, DLPG, TKAD, and ITSA. Mg(2+)-binding residues include serine 37 and threonine 59.

The protein belongs to the TRAFAC class TrmE-Era-EngA-EngB-Septin-like GTPase superfamily. EngB GTPase family. Mg(2+) serves as cofactor.

Functionally, necessary for normal cell division and for the maintenance of normal septation. This is Probable GTP-binding protein EngB from Christiangramia forsetii (strain DSM 17595 / CGMCC 1.15422 / KT0803) (Gramella forsetii).